The primary structure comprises 493 residues: Glutamate synthase [NADPH] small chain (493 aa).

299–313 is a binding site for NADP(+); the sequence is GGGDTGADCVATALR.

This sequence belongs to the glutamate synthase family. Aggregate of 4 catalytic active heterodimers, consisting of a large and a small subunit.

It carries out the reaction 2 L-glutamate + NADP(+) = L-glutamine + 2-oxoglutarate + NADPH + H(+). It functions in the pathway amino-acid biosynthesis; L-glutamate biosynthesis via GLT pathway; L-glutamate from 2-oxoglutarate and L-glutamine (NADP(+) route): step 1/1. The protein operates within energy metabolism; nitrogen metabolism. The protein is Glutamate synthase [NADPH] small chain (gltB) of Bacillus subtilis (strain 168).